The following is a 409-amino-acid chain: Argininosuccinate synthase (409 aa).

Residues 15–23 and Ala-42 contribute to the ATP site; that span reads AYSGGLDTS. Positions 93 and 98 each coordinate L-citrulline. Gly-123 provides a ligand contact to ATP. Residues Thr-125, Asn-129, and Asp-130 each coordinate L-aspartate. Asn-129 contributes to the L-citrulline binding site. Residues Arg-133, Ser-182, Ser-191, Glu-267, and Tyr-279 each coordinate L-citrulline.

The protein belongs to the argininosuccinate synthase family. Type 1 subfamily. In terms of assembly, homotetramer.

The protein resides in the cytoplasm. It catalyses the reaction L-citrulline + L-aspartate + ATP = 2-(N(omega)-L-arginino)succinate + AMP + diphosphate + H(+). Its pathway is amino-acid biosynthesis; L-arginine biosynthesis; L-arginine from L-ornithine and carbamoyl phosphate: step 2/3. The polypeptide is Argininosuccinate synthase (Desulfitobacterium hafniense (strain Y51)).